Here is a 1201-residue protein sequence, read N- to C-terminus: DNA-directed RNA polymerase subunit beta' (1201 aa).

C60, C62, C75, and C78 together coordinate Zn(2+). Mg(2+) contacts are provided by D449, D451, and D453. Residues C818, C892, C899, and C902 each coordinate Zn(2+).

The protein belongs to the RNA polymerase beta' chain family. The RNAP catalytic core consists of 2 alpha, 1 beta, 1 beta' and 1 omega subunit. When a sigma factor is associated with the core the holoenzyme is formed, which can initiate transcription. Mg(2+) serves as cofactor. The cofactor is Zn(2+).

The enzyme catalyses RNA(n) + a ribonucleoside 5'-triphosphate = RNA(n+1) + diphosphate. Its function is as follows. DNA-dependent RNA polymerase catalyzes the transcription of DNA into RNA using the four ribonucleoside triphosphates as substrates. This chain is DNA-directed RNA polymerase subunit beta', found in Listeria monocytogenes serovar 1/2a (strain ATCC BAA-679 / EGD-e).